Here is a 715-residue protein sequence, read N- to C-terminus: Fatty acid oxidation complex subunit alpha (715 aa).

The segment at 1–190 is enoyl-CoA hydratase/isomerase; that stretch reads MIYEGKAITV…KVGAVDAVVA (190 aa). Position 297 (aspartate 297) interacts with substrate. Positions 312-715 are 3-hydroxyacyl-CoA dehydrogenase; the sequence is KDVKQAAVLG…MAKNGQSFFG (404 aa). NAD(+)-binding positions include methionine 325, aspartate 344, 401 to 403, lysine 408, and serine 430; that span reads VVE. Histidine 451 acts as the For 3-hydroxyacyl-CoA dehydrogenase activity in catalysis. Position 454 (asparagine 454) interacts with NAD(+). Residues asparagine 501 and tyrosine 660 each contribute to the substrate site.

The protein in the N-terminal section; belongs to the enoyl-CoA hydratase/isomerase family. In the C-terminal section; belongs to the 3-hydroxyacyl-CoA dehydrogenase family. In terms of assembly, heterotetramer of two alpha chains (FadB) and two beta chains (FadA).

The catalysed reaction is a (3S)-3-hydroxyacyl-CoA + NAD(+) = a 3-oxoacyl-CoA + NADH + H(+). It catalyses the reaction a (3S)-3-hydroxyacyl-CoA = a (2E)-enoyl-CoA + H2O. It carries out the reaction a 4-saturated-(3S)-3-hydroxyacyl-CoA = a (3E)-enoyl-CoA + H2O. The enzyme catalyses (3S)-3-hydroxybutanoyl-CoA = (3R)-3-hydroxybutanoyl-CoA. The catalysed reaction is a (3Z)-enoyl-CoA = a 4-saturated (2E)-enoyl-CoA. It catalyses the reaction a (3E)-enoyl-CoA = a 4-saturated (2E)-enoyl-CoA. It participates in lipid metabolism; fatty acid beta-oxidation. Functionally, involved in the aerobic and anaerobic degradation of long-chain fatty acids via beta-oxidation cycle. Catalyzes the formation of 3-oxoacyl-CoA from enoyl-CoA via L-3-hydroxyacyl-CoA. It can also use D-3-hydroxyacyl-CoA and cis-3-enoyl-CoA as substrate. In Pseudomonas fluorescens (strain Pf0-1), this protein is Fatty acid oxidation complex subunit alpha.